Here is a 418-residue protein sequence, read N- to C-terminus: Tyrosine--tRNA ligase (418 aa).

Tyr-34 contributes to the L-tyrosine binding site. The 'HIGH' region motif lies at 39–48 (PTADSLHLGH). Residues Tyr-169 and Gln-173 each coordinate L-tyrosine. Positions 229–233 (KFGKS) match the 'KMSKS' region motif. Lys-232 contributes to the ATP binding site. One can recognise an S4 RNA-binding domain in the interval 352–418 (NNIVELLVSS…GKKKYFVLTY (67 aa)).

The protein belongs to the class-I aminoacyl-tRNA synthetase family. TyrS type 1 subfamily. In terms of assembly, homodimer.

Its subcellular location is the cytoplasm. The enzyme catalyses tRNA(Tyr) + L-tyrosine + ATP = L-tyrosyl-tRNA(Tyr) + AMP + diphosphate + H(+). Its function is as follows. Catalyzes the attachment of tyrosine to tRNA(Tyr) in a two-step reaction: tyrosine is first activated by ATP to form Tyr-AMP and then transferred to the acceptor end of tRNA(Tyr). This chain is Tyrosine--tRNA ligase, found in Streptococcus pneumoniae (strain Taiwan19F-14).